Consider the following 495-residue polypeptide: NADH-ubiquinone oxidoreductase chain 4 (495 aa).

The next 14 helical transmembrane spans lie at 9 to 29 (YSNLSGLILLPLLGSLIILVI), 37 to 57 (IRGITIWTSLITFLYSLFFWI), 89 to 109 (ISLFFVILTTFLTPICILVGF), 118 to 138 (EYMIAFFICESFLIAVFCSLD), 139 to 159 (LLIFYVFFESVLIPMFIIIGV), 173 to 193 (FFLYTLMGSLFMLLAILFIFF), 214 to 234 (ILLWIAFFASFSVKVPMVPVH), 245 to 265 (PTAGSVILAGILLKLGTYGFL), 272 to 292 (FPEATLYFTPFIYTLSVIAII), 307 to 327 (IIAYSSVAHMNFVTIGMFSLN), 335 to 355 (ILLMLSHGLVSSALFLCVGAL), 367 to 387 (YGGLVSTMPIFSTIFLFFTLA), 413 to 433 (LVATLAALGMILGAAYSLWLY), and 457 to 477 (VLIFLPFIVGVIWMGVYPEVF).

The protein belongs to the complex I subunit 4 family.

It is found in the mitochondrion membrane. It catalyses the reaction a ubiquinone + NADH + 5 H(+)(in) = a ubiquinol + NAD(+) + 4 H(+)(out). Core subunit of the mitochondrial membrane respiratory chain NADH dehydrogenase (Complex I) that is believed to belong to the minimal assembly required for catalysis. Complex I functions in the transfer of electrons from NADH to the respiratory chain. The immediate electron acceptor for the enzyme is believed to be ubiquinone. In Marchantia polymorpha (Common liverwort), this protein is NADH-ubiquinone oxidoreductase chain 4 (ND4).